The sequence spans 292 residues: 4-hydroxy-tetrahydrodipicolinate synthase (292 aa).

T45 provides a ligand contact to pyruvate. Catalysis depends on Y133, which acts as the Proton donor/acceptor. K161 (schiff-base intermediate with substrate) is an active-site residue. Residue I203 participates in pyruvate binding.

The protein belongs to the DapA family. In terms of assembly, homotetramer; dimer of dimers.

Its subcellular location is the cytoplasm. It catalyses the reaction L-aspartate 4-semialdehyde + pyruvate = (2S,4S)-4-hydroxy-2,3,4,5-tetrahydrodipicolinate + H2O + H(+). The protein operates within amino-acid biosynthesis; L-lysine biosynthesis via DAP pathway; (S)-tetrahydrodipicolinate from L-aspartate: step 3/4. Functionally, catalyzes the condensation of (S)-aspartate-beta-semialdehyde [(S)-ASA] and pyruvate to 4-hydroxy-tetrahydrodipicolinate (HTPA). The protein is 4-hydroxy-tetrahydrodipicolinate synthase of Shigella dysenteriae serotype 1 (strain Sd197).